The primary structure comprises 332 residues: Chorismate synthase (332 aa).

NADP(+) is bound at residue Arg-46. FMN contacts are provided by residues 123–125 (HFS), Gly-253, 268–272 (KPTSS), and Arg-295.

The protein belongs to the chorismate synthase family. As to quaternary structure, homotetramer. The cofactor is FMNH2.

The catalysed reaction is 5-O-(1-carboxyvinyl)-3-phosphoshikimate = chorismate + phosphate. The protein operates within metabolic intermediate biosynthesis; chorismate biosynthesis; chorismate from D-erythrose 4-phosphate and phosphoenolpyruvate: step 7/7. Catalyzes the anti-1,4-elimination of the C-3 phosphate and the C-6 proR hydrogen from 5-enolpyruvylshikimate-3-phosphate (EPSP) to yield chorismate, which is the branch point compound that serves as the starting substrate for the three terminal pathways of aromatic amino acid biosynthesis. This reaction introduces a second double bond into the aromatic ring system. The sequence is that of Chorismate synthase from Chitinophaga pinensis (strain ATCC 43595 / DSM 2588 / LMG 13176 / NBRC 15968 / NCIMB 11800 / UQM 2034).